The sequence spans 310 residues: Methionyl-tRNA formyltransferase (310 aa).

109-112 (SLLP) contacts (6S)-5,6,7,8-tetrahydrofolate.

The protein belongs to the Fmt family.

It carries out the reaction L-methionyl-tRNA(fMet) + (6R)-10-formyltetrahydrofolate = N-formyl-L-methionyl-tRNA(fMet) + (6S)-5,6,7,8-tetrahydrofolate + H(+). Attaches a formyl group to the free amino group of methionyl-tRNA(fMet). The formyl group appears to play a dual role in the initiator identity of N-formylmethionyl-tRNA by promoting its recognition by IF2 and preventing the misappropriation of this tRNA by the elongation apparatus. In Staphylococcus epidermidis (strain ATCC 12228 / FDA PCI 1200), this protein is Methionyl-tRNA formyltransferase.